The chain runs to 420 residues: Dihydrolipoyllysine-residue succinyltransferase component of 2-oxoglutarate dehydrogenase complex (420 aa).

A Lipoyl-binding domain is found at 3 to 78; the sequence is KINILVPDLP…ISQQTLGEIN (76 aa). N6-lipoyllysine is present on K44. Residues H391 and D395 contribute to the active site.

It belongs to the 2-oxoacid dehydrogenase family. As to quaternary structure, forms a 24-polypeptide structural core with octahedral symmetry. Part of the 2-oxoglutarate dehydrogenase (OGDH) complex composed of E1 (2-oxoglutarate dehydrogenase), E2 (dihydrolipoamide succinyltransferase) and E3 (dihydrolipoamide dehydrogenase); the complex contains multiple copies of the three enzymatic components (E1, E2 and E3). (R)-lipoate is required as a cofactor.

It carries out the reaction N(6)-[(R)-dihydrolipoyl]-L-lysyl-[protein] + succinyl-CoA = N(6)-[(R)-S(8)-succinyldihydrolipoyl]-L-lysyl-[protein] + CoA. Its pathway is amino-acid degradation; L-lysine degradation via saccharopine pathway; glutaryl-CoA from L-lysine: step 6/6. Functionally, E2 component of the 2-oxoglutarate dehydrogenase (OGDH) complex which catalyzes the second step in the conversion of 2-oxoglutarate to succinyl-CoA and CO(2). In Buchnera aphidicola subsp. Acyrthosiphon pisum (strain APS) (Acyrthosiphon pisum symbiotic bacterium), this protein is Dihydrolipoyllysine-residue succinyltransferase component of 2-oxoglutarate dehydrogenase complex (sucB).